A 314-amino-acid polypeptide reads, in one-letter code: Putative S-adenosyl-L-methionine-dependent methyltransferase MRA_3805 (314 aa).

S-adenosyl-L-methionine is bound by residues D132 and 161 to 162 (DL).

The protein belongs to the UPF0677 family.

Its function is as follows. Exhibits S-adenosyl-L-methionine-dependent methyltransferase activity. This Mycobacterium tuberculosis (strain ATCC 25177 / H37Ra) protein is Putative S-adenosyl-L-methionine-dependent methyltransferase MRA_3805.